The chain runs to 176 residues: Lipoprotein signal peptidase (176 aa).

A run of 4 helical transmembrane segments spans residues 10–30 (LFQFYPHNLIWLGLSVLAIVL), 48–68 (VPVLPFLNWTLLHNYGAAFSF), 78–98 (YFFTSLAGLVSILFVFWLLRM), and 102–122 (MVVLPVAIALILGGALGNLID). Residues aspartate 131 and aspartate 149 contribute to the active site. The chain crosses the membrane as a helical span at residues 141–161 (HFPAFNIADSAITLGTILLLI).

This sequence belongs to the peptidase A8 family.

The protein localises to the cell inner membrane. It catalyses the reaction Release of signal peptides from bacterial membrane prolipoproteins. Hydrolyzes -Xaa-Yaa-Zaa-|-(S,diacylglyceryl)Cys-, in which Xaa is hydrophobic (preferably Leu), and Yaa (Ala or Ser) and Zaa (Gly or Ala) have small, neutral side chains.. The protein operates within protein modification; lipoprotein biosynthesis (signal peptide cleavage). Functionally, this protein specifically catalyzes the removal of signal peptides from prolipoproteins. The protein is Lipoprotein signal peptidase of Acinetobacter baumannii (strain SDF).